The primary structure comprises 347 residues: Heat-inducible transcription repressor HrcA (347 aa).

It belongs to the HrcA family.

Negative regulator of class I heat shock genes (grpE-dnaK-dnaJ and groELS operons). Prevents heat-shock induction of these operons. This chain is Heat-inducible transcription repressor HrcA, found in Laribacter hongkongensis (strain HLHK9).